The primary structure comprises 121 residues: Ribonuclease P protein component (121 aa).

Belongs to the RnpA family. As to quaternary structure, consists of a catalytic RNA component (M1 or rnpB) and a protein subunit.

It carries out the reaction Endonucleolytic cleavage of RNA, removing 5'-extranucleotides from tRNA precursor.. RNaseP catalyzes the removal of the 5'-leader sequence from pre-tRNA to produce the mature 5'-terminus. It can also cleave other RNA substrates such as 4.5S RNA. The protein component plays an auxiliary but essential role in vivo by binding to the 5'-leader sequence and broadening the substrate specificity of the ribozyme. In Desulfosudis oleivorans (strain DSM 6200 / JCM 39069 / Hxd3) (Desulfococcus oleovorans), this protein is Ribonuclease P protein component.